A 472-amino-acid chain; its full sequence is 3-isopropylmalate dehydratase large subunit (472 aa).

3 residues coordinate [4Fe-4S] cluster: C352, C413, and C416.

This sequence belongs to the aconitase/IPM isomerase family. LeuC type 1 subfamily. As to quaternary structure, heterodimer of LeuC and LeuD. [4Fe-4S] cluster serves as cofactor.

It carries out the reaction (2R,3S)-3-isopropylmalate = (2S)-2-isopropylmalate. It participates in amino-acid biosynthesis; L-leucine biosynthesis; L-leucine from 3-methyl-2-oxobutanoate: step 2/4. Catalyzes the isomerization between 2-isopropylmalate and 3-isopropylmalate, via the formation of 2-isopropylmaleate. The chain is 3-isopropylmalate dehydratase large subunit from Laribacter hongkongensis (strain HLHK9).